The primary structure comprises 314 residues: MACGSVDPHGLLSSPLASARLNSLPYMEGPWIWSCGQTNITCKVVNGKAVEVGKWPWQVSILFLGMYICSGSLIHHHWILTAAHCLQRSKNPAKYTVKVGVQTLPDNSTSELLVTRIVIHENFINRMSDDIAILKLKYPVTWSPLVQPICLPSFNLKPSIGTMCWVVGWGLEKAEGHPKTPYSVQGLAVRIVNNEICNHRYQFLLLKNQKKFIGNDMLCTSSEWGLDTCQDTSGSSLVCQMNKTWVQMGVVSWNFDCGRRQFPSVYTSTSHFTQWIKRQIGDLKFTSMAVPSFLSPFILTGYILLVSLGSLWLL.

A Peptidase S1 domain is found at 44–281 (VVNGKAVEVG…FTQWIKRQIG (238 aa)). Cysteine 69 and cysteine 85 are oxidised to a cystine. Active-site charge relay system residues include histidine 84 and aspartate 130. 3 disulfides stabilise this stretch: cysteine 164-cysteine 239, cysteine 197-cysteine 219, and cysteine 229-cysteine 257. The Charge relay system role is filled by serine 233. A helical transmembrane segment spans residues 293–313 (FLSPFILTGYILLVSLGSLWL).

This sequence belongs to the peptidase S1 family.

The protein resides in the membrane. This Mus musculus (Mouse) protein is Serine protease 46 (Prss46).